The chain runs to 147 residues: Myoglobin (147 aa).

The Globin domain occupies 2–141; sequence ADFDAVLKCW…IIADLEANYK (140 aa). H60 contributes to the nitrite binding site. H60 serves as a coordination point for O2. Position 89 (H89) interacts with heme b.

It belongs to the globin family. Monomeric.

It localises to the cytoplasm. Its subcellular location is the sarcoplasm. The catalysed reaction is Fe(III)-heme b-[protein] + nitric oxide + H2O = Fe(II)-heme b-[protein] + nitrite + 2 H(+). It catalyses the reaction H2O2 + AH2 = A + 2 H2O. Functionally, monomeric heme protein which primary function is to store oxygen and facilitate its diffusion within muscle tissues. Reversibly binds oxygen through a pentacoordinated heme iron and enables its timely and efficient release as needed during periods of heightened demand. Depending on the oxidative conditions of tissues and cells, and in addition to its ability to bind oxygen, it also has a nitrite reductase activity whereby it regulates the production of bioactive nitric oxide. Under stress conditions, like hypoxia and anoxia, it also protects cells against reactive oxygen species thanks to its pseudoperoxidase activity. In Thunnus obesus (Bigeye tuna), this protein is Myoglobin (mb).